A 700-amino-acid chain; its full sequence is Sex comb on midleg-like protein 2 (700 aa).

Residues 1–33 (MGQTVNEDSMDVKKENQEKTPQSSTSSVQRDDF) are disordered. Residues 19 to 28 (KTPQSSTSSV) show a composition bias toward polar residues. 2 MBT repeats span residues 33–131 (FHWE…LQPP) and 139–240 (SSWP…LQPP). Polar residues predominate over residues 253–281 (TESSPSEASQHSMQSPQKTTLILPTQQVR). 2 disordered regions span residues 253 to 320 (TESS…EKPL) and 466 to 550 (PFSS…SSLN). Phosphoserine occurs at positions 256, 261, 267, 299, and 300. Position 305 is a phosphothreonine (threonine 305). The span at 476–495 (SSAEHDKNQSAKEDVTERQS) shows a compositional bias: basic and acidic residues. The residue at position 499 (serine 499) is a Phosphoserine. Threonine 503 carries the phosphothreonine modification. Serine 511 is subject to Phosphoserine. A Glycyl lysine isopeptide (Lys-Gly) (interchain with G-Cter in SUMO2) cross-link involves residue lysine 518. A Phosphoserine modification is found at serine 522. A compositionally biased stretch (basic and acidic residues) spans 535 to 545 (PKEENLSEDSK). A Glycyl lysine isopeptide (Lys-Gly) (interchain with G-Cter in SUMO2) cross-link involves residue lysine 536. Serine 570, serine 583, serine 590, and serine 594 each carry phosphoserine. The segment covering 575–584 (RSVPGTTSSP) has biased composition (polar residues). The tract at residues 575-594 (RSVPGTTSSPLVGDISPKSS) is disordered. Residues lysine 599 and lysine 605 each participate in a glycyl lysine isopeptide (Lys-Gly) (interchain with G-Cter in SUMO2) cross-link. The SAM domain maps to 631–700 (WSVDEVIQFM…IEKLKEGKYS (70 aa)).

It belongs to the SCM family. As to expression, highly expressed in placenta, thymus and testis. Detected at lower levels in brain, liver, skeletal muscle, pancreas and ovary.

Its subcellular location is the nucleus. In terms of biological role, putative Polycomb group (PcG) protein. PcG proteins act by forming multiprotein complexes, which are required to maintain the transcriptionally repressive state of homeotic genes throughout development. The polypeptide is Sex comb on midleg-like protein 2 (SCML2) (Homo sapiens (Human)).